Reading from the N-terminus, the 178-residue chain is Protein GrpE (178 aa).

The protein belongs to the GrpE family. Homodimer.

The protein localises to the cytoplasm. Its function is as follows. Participates actively in the response to hyperosmotic and heat shock by preventing the aggregation of stress-denatured proteins, in association with DnaK and GrpE. It is the nucleotide exchange factor for DnaK and may function as a thermosensor. Unfolded proteins bind initially to DnaJ; upon interaction with the DnaJ-bound protein, DnaK hydrolyzes its bound ATP, resulting in the formation of a stable complex. GrpE releases ADP from DnaK; ATP binding to DnaK triggers the release of the substrate protein, thus completing the reaction cycle. Several rounds of ATP-dependent interactions between DnaJ, DnaK and GrpE are required for fully efficient folding. The protein is Protein GrpE of Rickettsia typhi (strain ATCC VR-144 / Wilmington).